The sequence spans 624 residues: MKKNRFTYGLALGALGVVFGDIGTSPLYALKVTLSGIPINQFNILGVLSLIFWSLIIIVSFKYLMIIFRADNDGEGGILALLALMKHKSTKYQPLFYIVAIFGAGLLLGDGMLTPAISVVSAVEGLGTLSDKLYPYVLPIASVILVLLFSLQAKGTARIGYLFGPLILIWFITIAILGILQIVEHPVVLQAINPYHAIAFLVDEGLRGYFLLGGIFLVVTGGEALFADIGHFGKNPIRFSWFFIALPCLLLNYFGQGANLIVRPEEISNPFFMIAPPWFYLPLIIIATVATVIASQAVISATFSLTKQAVLLGLCPKIPIVQTSMLHSGQIYVPQINFILFIGTMAFCLAFKTSDNLAHAYGIAVNLEMLLVDAMVAYAAVSIWRWSTFNVIFLFGLFLLIDLAFLGANTHKFITGGWVPIVLAFFIAFIMYSWRYGLEYLRDNFYMNKEDISKILKQLQYKSLNQLPGVSAIFITDVYDKSGGSFLHFLKLNRSVPENVLIVNYIVDNIPYVHYSQRYEIVCLDEKVCKLVIHYGFMETINIPRSLEKACNKNILPFKFNVDTATFMVEIPNIMASKEKRSLSFYWQEKLFAFLMRNYSANLNIEFYKLPYNRTIAIGTYCIL.

12 consecutive transmembrane segments (helical) span residues 10-30, 48-68, 94-114, 133-153, 159-179, 210-230, 242-262, 270-290, 331-351, 363-383, 388-408, and 413-433; these read LALG…LYAL, LSLI…MIIF, PLFY…GMLT, LYPY…SLQA, IGYL…ILGI, FLLG…ADIG, FFIA…NLIV, PFFM…ATVA, IYVP…CLAF, IAVN…AVSI, TFNV…FLGA, and FITG…IMYS.

Belongs to the HAK/KUP transporter (TC 2.A.72) family.

It localises to the cell inner membrane. The catalysed reaction is K(+)(in) + H(+)(in) = K(+)(out) + H(+)(out). Its function is as follows. Transport of potassium into the cell. Likely operates as a K(+):H(+) symporter. The sequence is that of Probable potassium transport system protein Kup 1 from Legionella pneumophila subsp. pneumophila (strain Philadelphia 1 / ATCC 33152 / DSM 7513).